The primary structure comprises 135 residues: Small ribosomal subunit protein uS11 (135 aa).

Belongs to the universal ribosomal protein uS11 family. As to quaternary structure, part of the 30S ribosomal subunit. Interacts with proteins S7 and S18. Binds to IF-3.

Its function is as follows. Located on the platform of the 30S subunit, it bridges several disparate RNA helices of the 16S rRNA. Forms part of the Shine-Dalgarno cleft in the 70S ribosome. The sequence is that of Small ribosomal subunit protein uS11 from Protochlamydia amoebophila (strain UWE25).